The sequence spans 230 residues: Ribonuclease 3 (230 aa).

The 121-residue stretch at 5-125 folds into the RNase III domain; it reads YSRFYNILGY…VIGAIYLDSD (121 aa). Mg(2+) is bound at residue glutamate 40. The active site involves aspartate 44. Mg(2+) contacts are provided by aspartate 111 and glutamate 114. The active site involves glutamate 114. The region spanning 153–223 is the DRBM domain; the sequence is DSKSKLQEIL…AEKMIEMLSQ (71 aa).

This sequence belongs to the ribonuclease III family. Homodimer. Requires Mg(2+) as cofactor.

The protein resides in the cytoplasm. It catalyses the reaction Endonucleolytic cleavage to 5'-phosphomonoester.. In terms of biological role, digests double-stranded RNA. Involved in the processing of primary rRNA transcript to yield the immediate precursors to the large and small rRNAs (23S and 16S). Processes some mRNAs, and tRNAs when they are encoded in the rRNA operon. Processes pre-crRNA and tracrRNA of type II CRISPR loci if present in the organism. This Francisella tularensis subsp. holarctica (strain FTNF002-00 / FTA) protein is Ribonuclease 3.